The primary structure comprises 131 residues: Protein NrdI (131 aa).

The protein belongs to the NrdI family.

In terms of biological role, probably involved in ribonucleotide reductase function. This chain is Protein NrdI, found in Bacillus licheniformis (strain ATCC 14580 / DSM 13 / JCM 2505 / CCUG 7422 / NBRC 12200 / NCIMB 9375 / NCTC 10341 / NRRL NRS-1264 / Gibson 46).